A 156-amino-acid polypeptide reads, in one-letter code: ATP synthase subunit b (156 aa).

Residues 7–29 (LIGQSITFIFFVWFSMKFVWPPI) traverse the membrane as a helical segment.

It belongs to the ATPase B chain family. F-type ATPases have 2 components, F(1) - the catalytic core - and F(0) - the membrane proton channel. F(1) has five subunits: alpha(3), beta(3), gamma(1), delta(1), epsilon(1). F(0) has three main subunits: a(1), b(2) and c(10-14). The alpha and beta chains form an alternating ring which encloses part of the gamma chain. F(1) is attached to F(0) by a central stalk formed by the gamma and epsilon chains, while a peripheral stalk is formed by the delta and b chains.

The protein resides in the cell inner membrane. Its function is as follows. F(1)F(0) ATP synthase produces ATP from ADP in the presence of a proton or sodium gradient. F-type ATPases consist of two structural domains, F(1) containing the extramembraneous catalytic core and F(0) containing the membrane proton channel, linked together by a central stalk and a peripheral stalk. During catalysis, ATP synthesis in the catalytic domain of F(1) is coupled via a rotary mechanism of the central stalk subunits to proton translocation. Component of the F(0) channel, it forms part of the peripheral stalk, linking F(1) to F(0). The sequence is that of ATP synthase subunit b from Thiobacillus denitrificans (strain ATCC 25259 / T1).